Reading from the N-terminus, the 133-residue chain is Small ribosomal subunit protein uS8c (133 aa).

The protein belongs to the universal ribosomal protein uS8 family. As to quaternary structure, part of the 30S ribosomal subunit.

It localises to the plastid. The protein resides in the chloroplast. Its function is as follows. One of the primary rRNA binding proteins, it binds directly to 16S rRNA central domain where it helps coordinate assembly of the platform of the 30S subunit. The polypeptide is Small ribosomal subunit protein uS8c (rps8) (Cyanidium caldarium (Red alga)).